Consider the following 344-residue polypeptide: 3-isopropylmalate dehydrogenase (344 aa).

Position 74-87 (Gly74–Glu87) interacts with NAD(+). The substrate site is built by Arg94, Arg104, Arg132, and Asp217. Positions 217, 241, and 245 each coordinate Mg(2+). Gly274–Asn286 is a binding site for NAD(+).

This sequence belongs to the isocitrate and isopropylmalate dehydrogenases family. LeuB type 1 subfamily. In terms of assembly, homodimer. The cofactor is Mg(2+). It depends on Mn(2+) as a cofactor.

It is found in the cytoplasm. It carries out the reaction (2R,3S)-3-isopropylmalate + NAD(+) = 4-methyl-2-oxopentanoate + CO2 + NADH. The protein operates within amino-acid biosynthesis; L-leucine biosynthesis; L-leucine from 3-methyl-2-oxobutanoate: step 3/4. Its function is as follows. Catalyzes the oxidation of 3-carboxy-2-hydroxy-4-methylpentanoate (3-isopropylmalate) to 3-carboxy-4-methyl-2-oxopentanoate. The product decarboxylates to 4-methyl-2 oxopentanoate. The chain is 3-isopropylmalate dehydrogenase (leuB) from Thermus aquaticus.